Here is a 319-residue protein sequence, read N- to C-terminus: Cytochrome f (319 aa).

The signal sequence occupies residues 1 to 34 (MQNRNTYEWTKKMTRLISVLVMIHIITRTSISNA). Heme is bound by residues Tyr35, Cys55, Cys58, and His59. The helical transmembrane segment at 285–305 (VKGLLLFLASVILAQIFLVLK) threads the bilayer.

Belongs to the cytochrome f family. As to quaternary structure, the 4 large subunits of the cytochrome b6-f complex are cytochrome b6, subunit IV (17 kDa polypeptide, petD), cytochrome f and the Rieske protein, while the 4 small subunits are PetG, PetL, PetM and PetN. The complex functions as a dimer. Requires heme as cofactor.

The protein resides in the plastid. The protein localises to the chloroplast thylakoid membrane. Component of the cytochrome b6-f complex, which mediates electron transfer between photosystem II (PSII) and photosystem I (PSI), cyclic electron flow around PSI, and state transitions. This chain is Cytochrome f, found in Pinus koraiensis (Korean pine).